A 362-amino-acid polypeptide reads, in one-letter code: Solute carrier family 25 member 3 (362 aa).

A mitochondrion-targeting transit peptide spans 1-49 (MFSSVAHLARANPFNTPHLQLVHDGLGDLRSSSPGPTGQPRRPRNLAAA). At 50–63 (AVEEQYSCDYGSGR) the chain is on the mitochondrial intermembrane side. 3 Solcar repeats span residues 63–147 (RFFI…FKVL), 160–244 (WRTS…TVEA), and 261–339 (EQLV…VKVY). The chain crosses the membrane as a helical span at residues 64–86 (FFILCGLGGIISCGTTHTALVPL). Residues 87–121 (DLVKCRMQVDPQKYKGIFNGFSVTLKEDGVRGLAK) lie on the Mitochondrial matrix side of the membrane. Lys-99 carries the post-translational modification N6-acetyllysine. Residue Lys-112 is modified to N6-methyllysine. Residues 122–141 (GWAPTFLGYSMQGLCKFGFY) form a helical membrane-spanning segment. Residues 142-161 (EVFKVLYSNMLGEENTYLWR) are Mitochondrial intermembrane-facing. Residues 162 to 183 (TSLYLAASASAEFFADIALAPM) form a helical membrane-spanning segment. At 184–218 (EAAKVRIQTQPGYANTLRDAAPKMYKEEGLKAFYK) the chain is on the mitochondrial matrix side. Phosphotyrosine is present on Tyr-196. Lys-209 carries the post-translational modification N6-acetyllysine. The helical transmembrane segment at 219-238 (GVAPLWMRQIPYTMMKFACF) threads the bilayer. Residues 239 to 261 (ERTVEALYKFVVPKPRSECSKPE) lie on the Mitochondrial intermembrane side of the membrane. A helical transmembrane segment spans residues 262 to 284 (QLVVTFVAGYIAGVFCAIVSHPA). The Mitochondrial matrix portion of the chain corresponds to 285–314 (DSVVSVLNKEKGSSASLVLKRLGFKGVWKG). The chain crosses the membrane as a helical span at residues 315 to 333 (LFARIIMIGTLTALQWFIY). Over 334-362 (DSVKVYFRLPRPPPPEMPESLKKKLGLTQ) the chain is Mitochondrial intermembrane.

The protein belongs to the mitochondrial carrier (TC 2.A.29) family. Interacts with PPIF; the interaction is impaired by CsA.

It localises to the mitochondrion inner membrane. The catalysed reaction is phosphate(in) + H(+)(in) = phosphate(out) + H(+)(out). In terms of biological role, inorganic ion transporter that transports phosphate or copper ions across the mitochondrial inner membrane into the matrix compartment. Mediates proton-coupled symport of phosphate ions necessary for mitochondrial oxidative phosphorylation of ADP to ATP. Transports copper ions probably in the form of anionic copper(I) complexes to maintain mitochondrial matrix copper pool and to supply copper for cytochrome C oxidase complex assembly. May also play a role in regulation of the mitochondrial permeability transition pore (mPTP). In Homo sapiens (Human), this protein is Solute carrier family 25 member 3.